We begin with the raw amino-acid sequence, 92 residues long: Probable Fe(2+)-trafficking protein (92 aa).

Belongs to the Fe(2+)-trafficking protein family.

In terms of biological role, could be a mediator in iron transactions between iron acquisition and iron-requiring processes, such as synthesis and/or repair of Fe-S clusters in biosynthetic enzymes. The protein is Probable Fe(2+)-trafficking protein of Shewanella baltica (strain OS223).